A 270-amino-acid chain; its full sequence is tRNA 2-(methylsulfanyl)-N(6)-isopentenyladenosine(37) hydroxylase (270 aa).

6 residues coordinate Fe cation: Glu-59, Glu-137, His-140, Glu-190, Glu-219, and His-222.

This sequence belongs to the MiaE family. Monomer. Fe cation is required as a cofactor.

It carries out the reaction 2-methylsulfanyl-N(6)-dimethylallyladenosine(37) in tRNA + AH2 + O2 = N(6)-[(2E)-4-hydroxy-3-methylbut-2-en-1-yl]-2-(methylsulfanyl)adenosine(37) in tRNA + A + H2O. The protein operates within tRNA modification; 2-methylthio-N-6-(cis-hydroxy)isopentenyl adenosine-tRNA biosynthesis. Its function is as follows. Involved in specific tRNA modification. Catalyzes the oxygen-dependent hydroxylation of 2-methylthio-N-6-isopentenyl adenosine (ms2i6A) to produce 2-methylthio-N-6-(cis-hydroxy)isopentenyl adenosine (ms2io6A) at position 37 in tRNAs. Can also use N6-(dimethylallyl)adenosine (i6A) as substrate, with lower efficiency. The presence of the hydroxyl group on the tRNA may regulate the ability of S.typhimurium to grow on the citric acid cycle (CAC) intermediates succinate, fumarate and malate. This chain is tRNA 2-(methylsulfanyl)-N(6)-isopentenyladenosine(37) hydroxylase, found in Salmonella typhimurium (strain LT2 / SGSC1412 / ATCC 700720).